A 150-amino-acid chain; its full sequence is 1,4-dihydroxy-2-naphthoyl-CoA hydrolase (150 aa).

Asp19 is an active-site residue.

Belongs to the 4-hydroxybenzoyl-CoA thioesterase family. DHNA-CoA hydrolase subfamily.

It carries out the reaction 1,4-dihydroxy-2-naphthoyl-CoA + H2O = 1,4-dihydroxy-2-naphthoate + CoA + H(+). It participates in cofactor biosynthesis; phylloquinone biosynthesis. Its pathway is quinol/quinone metabolism; 1,4-dihydroxy-2-naphthoate biosynthesis; 1,4-dihydroxy-2-naphthoate from chorismate: step 7/7. Its function is as follows. Catalyzes the hydrolysis of 1,4-dihydroxy-2-naphthoyl-CoA (DHNA-CoA) to 1,4-dihydroxy-2-naphthoate (DHNA), a reaction involved in phylloquinone (vitamin K1) biosynthesis. The polypeptide is 1,4-dihydroxy-2-naphthoyl-CoA hydrolase (Prochlorococcus marinus (strain AS9601)).